The sequence spans 418 residues: Queuine tRNA-ribosyltransferase accessory subunit 2 (418 aa).

4 residues coordinate Zn(2+): Cys-325, Cys-327, Cys-330, and His-356.

The protein belongs to the queuine tRNA-ribosyltransferase family. QTRT2 subfamily. Heterodimer of a catalytic subunit and an accessory subunit. Zn(2+) is required as a cofactor.

It is found in the cytoplasm. In terms of biological role, non-catalytic subunit of the queuine tRNA-ribosyltransferase (TGT) that catalyzes the base-exchange of a guanine (G) residue with queuine (Q) at position 34 (anticodon wobble position) in tRNAs with GU(N) anticodons (tRNA-Asp, -Asn, -His and -Tyr), resulting in the hypermodified nucleoside queuosine (7-(((4,5-cis-dihydroxy-2-cyclopenten-1-yl)amino)methyl)-7-deazaguanosine). In Drosophila erecta (Fruit fly), this protein is Queuine tRNA-ribosyltransferase accessory subunit 2.